The chain runs to 117 residues: UPF0342 protein GWCH70_0629 (117 aa).

This sequence belongs to the UPF0342 family.

The protein is UPF0342 protein GWCH70_0629 of Geobacillus sp. (strain WCH70).